A 327-amino-acid polypeptide reads, in one-letter code: Cytochrome c oxidase subunit 2 (327 aa).

Residues 1 to 23 form the signal peptide; that stretch reads MEQIPASIWTLTAGVVVTLISFW. 2 consecutive transmembrane segments (helical) span residues 56 to 78 and 96 to 114; these read LFLV…AGEE and AIPA…DIFQ. Cu cation-binding residues include His-221, Cys-255, Cys-259, and His-263.

This sequence belongs to the cytochrome c oxidase subunit 2 family. Cu cation serves as cofactor.

The protein localises to the cell membrane. The enzyme catalyses 4 Fe(II)-[cytochrome c] + O2 + 8 H(+)(in) = 4 Fe(III)-[cytochrome c] + 2 H2O + 4 H(+)(out). Functionally, subunits I and II form the functional core of the enzyme complex. Electrons originating in cytochrome c are transferred via heme a and Cu(A) to the binuclear center formed by heme a3 and Cu(B). The chain is Cytochrome c oxidase subunit 2 (ctaC) from Thermostichus vulcanus (Synechococcus vulcanus).